The chain runs to 476 residues: Adenosylhomocysteinase (476 aa).

Substrate is bound by residues Thr67, Asp142, and Glu202. 203 to 205 is a binding site for NAD(+); it reads TTT. Substrate-binding residues include Lys232 and Asp236. Residues Asn237, 266–271, Glu289, Asn324, 345–347, and Asn390 contribute to the NAD(+) site; these read GYGDVG and IGH.

The protein belongs to the adenosylhomocysteinase family. NAD(+) serves as cofactor.

The protein resides in the cytoplasm. It catalyses the reaction S-adenosyl-L-homocysteine + H2O = L-homocysteine + adenosine. Its pathway is amino-acid biosynthesis; L-homocysteine biosynthesis; L-homocysteine from S-adenosyl-L-homocysteine: step 1/1. In terms of biological role, may play a key role in the regulation of the intracellular concentration of adenosylhomocysteine. This Synechococcus sp. (strain CC9605) protein is Adenosylhomocysteinase.